A 404-amino-acid polypeptide reads, in one-letter code: MSKVNKVVLAYSGGLDTSVIVKWLQENYDCEVVTFTADIGQGEEVEPARAKAEKLGVKQIFIEDLREEFARDFVFPMFRANTIYEGEYLLGTSIARPLIAKRLVEIANETGADAISHGATGKGNDQVRFELGAYALKPGIKVIAPWREWDLTSREKLLTYCDTHDIAVEKKKGKSPYSMDANLLHISYEGGILEDPWEEAEEDMWRWSVSPEAAPDQATYLELTYQNGDIVAIDGEALAPHEVIERLNKVGGVNGVGRLDIVENRYVGMKSRGCYETPGGTIMLRAHRAIESITLDKELAHLKDSLMPKYAELIYNGYWWSPERLALQKLIDESQQHVNGVVRVKLYKGNVIVAGRKSEDSLFDDRIATFEDDGGVYNQRDAEGFIKLNALRMRIAADKGRSMK.

ATP-binding positions include 10–18 (AYSGGLDTS) and Ala37. Tyr88 and Ser93 together coordinate L-citrulline. Gly118 lines the ATP pocket. Residues Thr120, Asn124, and Asp125 each contribute to the L-aspartate site. Position 124 (Asn124) interacts with L-citrulline. L-citrulline is bound by residues Arg128, Ser178, Ser187, Glu263, and Tyr275.

This sequence belongs to the argininosuccinate synthase family. Type 1 subfamily. In terms of assembly, homotetramer.

It is found in the cytoplasm. It carries out the reaction L-citrulline + L-aspartate + ATP = 2-(N(omega)-L-arginino)succinate + AMP + diphosphate + H(+). The protein operates within amino-acid biosynthesis; L-arginine biosynthesis; L-arginine from L-ornithine and carbamoyl phosphate: step 2/3. In Hahella chejuensis (strain KCTC 2396), this protein is Argininosuccinate synthase.